The primary structure comprises 469 residues: GDP-fucose protein O-fucosyltransferase 2 (469 aa).

An N-terminal signal peptide occupies residues 1 to 18 (MKFIIVLLLFFFFKVIDR). Residues 56–60 (GEGFN), 277–279 (HLR), and 373–374 (RF) each bind GDP-beta-L-fucose. Catalysis depends on Glu-57, which acts as the Proton acceptor.

It belongs to the glycosyltransferase 68 family.

It is found in the endoplasmic reticulum. The enzyme catalyses L-seryl-[protein] + GDP-beta-L-fucose = 3-O-(alpha-L-fucosyl)-L-seryl-[protein] + GDP + H(+). It carries out the reaction L-threonyl-[protein] + GDP-beta-L-fucose = 3-O-(alpha-L-fucosyl)-L-threonyl-[protein] + GDP + H(+). It functions in the pathway protein modification; protein glycosylation. Its function is as follows. Catalyzes the reaction that attaches fucose through an O-glycosidic linkage to a conserved serine or threonine residue in the consensus sequence C1-X-X-S/T-C2 of thrombospondin type I repeats (TSRs) where C1 and C2 are the first and second cysteines of the repeat, respectively. O-fucosylates sporozoite proteins CSP and TRAP. O-fucosylation regulates stability and intracellular trafficking of TRAP but not of CSP. Probably by regulating protein O-fucosylation, may play a role in parasite transmission to the mosquito vector and/or infection of the vertebrate host hepatocytes; however, POFUT2 involvement in transmission/infection is controversial. The polypeptide is GDP-fucose protein O-fucosyltransferase 2 (Plasmodium falciparum (isolate NF54)).